The following is a 343-amino-acid chain: Glyceraldehyde-3-phosphate dehydrogenase (343 aa).

NAD(+) is bound by residues threonine 13–isoleucine 14 and glycine 112. Serine 141–asparagine 143 is a D-glyceraldehyde 3-phosphate binding site. The active-site Nucleophile is cysteine 142. Residue arginine 170 coordinates NAD(+). Histidine 196–alanine 197 is a D-glyceraldehyde 3-phosphate binding site. Position 303 (glutamine 303) interacts with NAD(+).

It belongs to the glyceraldehyde-3-phosphate dehydrogenase family. As to quaternary structure, homotetramer.

Its subcellular location is the cytoplasm. It carries out the reaction D-glyceraldehyde 3-phosphate + phosphate + NADP(+) = (2R)-3-phospho-glyceroyl phosphate + NADPH + H(+). The enzyme catalyses D-glyceraldehyde 3-phosphate + phosphate + NAD(+) = (2R)-3-phospho-glyceroyl phosphate + NADH + H(+). Its pathway is carbohydrate degradation; glycolysis; pyruvate from D-glyceraldehyde 3-phosphate: step 1/5. This Aeropyrum pernix (strain ATCC 700893 / DSM 11879 / JCM 9820 / NBRC 100138 / K1) protein is Glyceraldehyde-3-phosphate dehydrogenase (gap).